An 859-amino-acid polypeptide reads, in one-letter code: DNA mismatch repair protein MutS (859 aa).

617–624 (GPNMGGKS) lines the ATP pocket. The tract at residues 799–821 (ETTSLPHEQPRAKPGKPAVPQQS) is disordered.

The protein belongs to the DNA mismatch repair MutS family.

Functionally, this protein is involved in the repair of mismatches in DNA. It is possible that it carries out the mismatch recognition step. This protein has a weak ATPase activity. This is DNA mismatch repair protein MutS from Pseudomonas savastanoi pv. phaseolicola (strain 1448A / Race 6) (Pseudomonas syringae pv. phaseolicola (strain 1448A / Race 6)).